The sequence spans 263 residues: uncharacterized protein (263 aa).

Residues 1 to 22 form the signal peptide; sequence MRYLKRVVLYRIVMVLSVFIIG. The N-palmitoyl cysteine moiety is linked to residue Cys-23. A lipid anchor (S-diacylglycerol cysteine) is attached at Cys-23.

The protein belongs to the staphylococcal tandem lipoprotein family.

The protein localises to the cell membrane. This is an uncharacterized protein from Staphylococcus aureus (strain bovine RF122 / ET3-1).